The primary structure comprises 53 residues: Conotoxin Cal22e (53 aa).

Positions 1–5 (GRPSA) are excised as a propeptide.

Post-translationally, contains 4 disulfide bonds. As to expression, expressed by the venom duct.

The protein localises to the secreted. In terms of biological role, probable neurotoxin with unknown target. Possibly targets ion channels. This chain is Conotoxin Cal22e, found in Californiconus californicus (California cone).